The following is a 406-amino-acid chain: Phosphopentomutase (406 aa).

Residues D10, D305, H310, D346, H347, and H358 each contribute to the Mn(2+) site.

The protein belongs to the phosphopentomutase family. The cofactor is Mn(2+).

The protein resides in the cytoplasm. It catalyses the reaction 2-deoxy-alpha-D-ribose 1-phosphate = 2-deoxy-D-ribose 5-phosphate. It carries out the reaction alpha-D-ribose 1-phosphate = D-ribose 5-phosphate. It participates in carbohydrate degradation; 2-deoxy-D-ribose 1-phosphate degradation; D-glyceraldehyde 3-phosphate and acetaldehyde from 2-deoxy-alpha-D-ribose 1-phosphate: step 1/2. Isomerase that catalyzes the conversion of deoxy-ribose 1-phosphate (dRib-1-P) and ribose 1-phosphate (Rib-1-P) to deoxy-ribose 5-phosphate (dRib-5-P) and ribose 5-phosphate (Rib-5-P), respectively. The polypeptide is Phosphopentomutase (Rhizobium etli (strain ATCC 51251 / DSM 11541 / JCM 21823 / NBRC 15573 / CFN 42)).